A 234-amino-acid chain; its full sequence is Phycobilisome rod-core linker polypeptide cpcG (234 aa).

Residues 11-191 form the PBS-linker domain; the sequence is SSQNHRVNSF…PRYGSDFKER (181 aa).

It belongs to the phycobilisome linker protein family. The phycobilisome is a hemidiscoidal structure that is composed of two distinct substructures: a core complex and a number of rods radiating from the core.

It localises to the plastid. Its subcellular location is the chloroplast thylakoid membrane. Rod-core linker protein required for attachment of phycocyanin to allophycocyanin in cores of phycobilisomes. Its function is as follows. Linker polypeptides determine the state of aggregation and the location of the disk-shaped phycobiliprotein units within the phycobilisome and modulate their spectroscopic properties in order to mediate a directed and optimal energy transfer. The protein is Phycobilisome rod-core linker polypeptide cpcG (cpcG) of Cyanidium caldarium (Red alga).